Reading from the N-terminus, the 376-residue chain is Protein-glutamate methylesterase/protein-glutamine glutaminase 1 (376 aa).

A Response regulatory domain is found at 4–121 (KVLVVDDSSF…ARNRDEAVSL (118 aa)). 4-aspartylphosphate is present on D55. The interval 138 to 169 (RPVASSTPVQERPQSTLNRPTTGLRREASAQA) is disordered. Residues 141-158 (ASSTPVQERPQSTLNRPT) show a composition bias toward polar residues. Positions 183–376 (SGKKYQLTAI…ERMLVEVGLA (194 aa)) constitute a CheB-type methylesterase domain. Active-site residues include S195, H222, and D318.

The protein belongs to the CheB family. In terms of processing, phosphorylated by CheA. Phosphorylation of the N-terminal regulatory domain activates the methylesterase activity.

The protein resides in the cytoplasm. The catalysed reaction is [protein]-L-glutamate 5-O-methyl ester + H2O = L-glutamyl-[protein] + methanol + H(+). It carries out the reaction L-glutaminyl-[protein] + H2O = L-glutamyl-[protein] + NH4(+). In terms of biological role, involved in chemotaxis. Part of a chemotaxis signal transduction system that modulates chemotaxis in response to various stimuli. Catalyzes the demethylation of specific methylglutamate residues introduced into the chemoreceptors (methyl-accepting chemotaxis proteins or MCP) by CheR. Also mediates the irreversible deamidation of specific glutamine residues to glutamic acid. The polypeptide is Protein-glutamate methylesterase/protein-glutamine glutaminase 1 (Vibrio vulnificus (strain YJ016)).